The sequence spans 439 residues: tRNA modification GTPase MnmE (439 aa).

(6S)-5-formyl-5,6,7,8-tetrahydrofolate-binding residues include arginine 20, glutamate 78, and lysine 116. The 154-residue stretch at 211–364 folds into the TrmE-type G domain; it reads GIYVAILGEP…LLSAIQKKVE (154 aa). GTP contacts are provided by residues 221-226, 240-246, and 265-268; these read NSGKST, SEYAGTT, and DTAG. Mg(2+)-binding residues include serine 225 and threonine 246. Lysine 439 is a binding site for (6S)-5-formyl-5,6,7,8-tetrahydrofolate.

It belongs to the TRAFAC class TrmE-Era-EngA-EngB-Septin-like GTPase superfamily. TrmE GTPase family. Homodimer. Heterotetramer of two MnmE and two MnmG subunits. The cofactor is K(+).

Its subcellular location is the cytoplasm. Exhibits a very high intrinsic GTPase hydrolysis rate. Involved in the addition of a carboxymethylaminomethyl (cmnm) group at the wobble position (U34) of certain tRNAs, forming tRNA-cmnm(5)s(2)U34. In Ehrlichia ruminantium (strain Welgevonden), this protein is tRNA modification GTPase MnmE.